We begin with the raw amino-acid sequence, 328 residues long: Interferon regulatory factor 1 (328 aa).

A DNA-binding region (IRF tryptophan pentad repeat) is located at residues 5-113; the sequence is RMRMRPWLEM…SAVRVYRMLP (109 aa). At Lys-78 the chain carries N6-acetyllysine. Residues 92–164 form a disordered region; sequence EEVKDQSRNK…STLPDDHSSY (73 aa). Residues 141–157 show a composition bias toward low complexity; it reads GDSSPDTLSDGLSSSTL. Glycyl lysine isopeptide (Lys-Gly) (interchain with G-Cter in SUMO) cross-links involve residues Lys-276 and Lys-300.

The protein belongs to the IRF family. As to quaternary structure, monomer. Homodimer. Interacts with EP300. Interacts with MYD88. Interacts with PIAS3. Interacts with SPOP. Post-translationally, phosphorylated by CK2 and this positively regulates its activity. In terms of processing, sumoylation represses the transcriptional activity and displays enhanced resistance to protein degradation. Sumoylated by UBE2I/UBC9 and SUMO1. Inactivates the tumor suppressor activity. Elevated levels in tumor cells. Major site is Lys-276. Sumoylation is enhanced by PIAS3. Desumoylated by SENP1 in tumor cells and appears to compete with ubiquitination on C-terminal sites. Ubiquitinated in a SPOP-depedent manner. Appears to compete with sumoylation on C-terminal sites.

The protein localises to the nucleus. The protein resides in the cytoplasm. Its activity is regulated as follows. Activated by MYD88. Its function is as follows. Transcriptional regulator which displays a remarkable functional diversity in the regulation of cellular responses. Regulates transcription of IFN and IFN-inducible genes, host response to viral and bacterial infections, regulation of many genes expressed during hematopoiesis, inflammation, immune responses and cell proliferation and differentiation, regulation of the cell cycle and induction of growth arrest and programmed cell death following DNA damage. Stimulates both innate and acquired immune responses through the activation of specific target genes and can act as a transcriptional activator and repressor regulating target genes by binding to an interferon-stimulated response element (ISRE) in their promoters. Has an essentail role in IFNG-dependent immunity to mycobacteria. Binds to a consensus sequence in gene promoters. Its target genes for transcriptional activation activity include: genes involved in anti-viral response, such as IFN-alpha/beta, RIGI, TNFSF10/TRAIL, ZBP1, OAS1/2, PIAS1/GBP, EIF2AK2/PKR and RSAD2/viperin; antibacterial response, such as GBP2, GBP5 and NOS2/INOS; anti-proliferative response, such as p53/TP53, LOX and CDKN1A; apoptosis, such as BBC3/PUMA, CASP1, CASP7 and CASP8; immune response, such as IL7, IL12A/B and IL15, PTGS2/COX2 and CYBB; DNA damage responses and DNA repair, such as POLQ/POLH; MHC class I expression, such as TAP1, PSMB9/LMP2, PSME1/PA28A, PSME2/PA28B and B2M and MHC class II expression, such as CIITA; metabolic enzymes, such as ACOD1/IRG1. Represses genes involved in anti-proliferative response, such as BIRC5/survivin, CCNB1, CCNE1, CDK1, CDK2 and CDK4 and in immune response, such as FOXP3, IL4, ANXA2 and TLR4. Stimulates p53/TP53-dependent transcription through enhanced recruitment of EP300 leading to increased acetylation of p53/TP53. Plays an important role in immune response directly affecting NK maturation and activity, macrophage production of IL12, Th1 development and maturation of CD8+ T-cells. Also implicated in the differentiation and maturation of dendritic cells and in the suppression of regulatory T (Treg) cells development. Acts as a tumor suppressor and plays a role not only in antagonism of tumor cell growth but also in stimulating an immune response against tumor cells. The sequence is that of Interferon regulatory factor 1 (Irf1) from Rattus norvegicus (Rat).